The primary structure comprises 597 residues: Hydrogenase-1 large chain (597 aa).

Ni(2+)-binding residues include Cys76, Cys79, Cys576, and Cys579.

The protein belongs to the [NiFe]/[NiFeSe] hydrogenase large subunit family. As to quaternary structure, heterodimer of a large and a small subunit. Requires Ni(2+) as cofactor.

The protein resides in the cell membrane. The catalysed reaction is H2 + A = AH2. The protein is Hydrogenase-1 large chain (hyaB) of Citrobacter freundii.